Here is a 262-residue protein sequence, read N- to C-terminus: MNILVTNDDGVHAPGIVALAEALRLVGTVTVVAPDRERSAVGHALTLHHPLRVTEIMAGIFAVDGTPTDCVNLGIHTLLAEAPDIVVSGVNRGGNLGDDITYSGTVSAALEATLMGIPAIAVSLATNGHGSNYRAAAAFAAQLAREVLDRGLPRDTFLNVNVPDLPAEELGGPVITSQGKRDYGGDIVTKVDPRGRNYYWIGGNEPVFRDIEGTDFHAVKRGRISVTPLHLDLTNYASLSILQSWDLSACRPEAGQPSGALL.

Residues Asp8, Asp9, Ser39, and Asn91 each contribute to the a divalent metal cation site.

Belongs to the SurE nucleotidase family. A divalent metal cation is required as a cofactor.

Its subcellular location is the cytoplasm. The catalysed reaction is a ribonucleoside 5'-phosphate + H2O = a ribonucleoside + phosphate. Its function is as follows. Nucleotidase that shows phosphatase activity on nucleoside 5'-monophosphates. This chain is 5'-nucleotidase SurE, found in Geobacter sulfurreducens (strain ATCC 51573 / DSM 12127 / PCA).